The following is a 439-amino-acid chain: uncharacterized protein (439 aa).

Disordered stretches follow at residues 1–36 (MRPGNAATAHDTGTQPRPGPTENWRSPAAVTRSKQA), 126–157 (SRTGAAVSDEYRPTGAALEQPGQEPGGTGVPI), and 411–439 (FRSDVPQPPPSPACRTTRAGSGAVAAVPR).

This is an uncharacterized protein from Streptomyces fradiae (Streptomyces roseoflavus).